A 224-amino-acid polypeptide reads, in one-letter code: Phosphoribosylformylglycinamidine synthase subunit PurQ (224 aa).

Positions 2–224 (KFAVIQFPGS…SILNHAEVKA (223 aa)) constitute a Glutamine amidotransferase type-1 domain. The Nucleophile role is filled by Cys86. Catalysis depends on residues His195 and Glu197.

Part of the FGAM synthase complex composed of 1 PurL, 1 PurQ and 2 PurS subunits.

It is found in the cytoplasm. It carries out the reaction N(2)-formyl-N(1)-(5-phospho-beta-D-ribosyl)glycinamide + L-glutamine + ATP + H2O = 2-formamido-N(1)-(5-O-phospho-beta-D-ribosyl)acetamidine + L-glutamate + ADP + phosphate + H(+). The enzyme catalyses L-glutamine + H2O = L-glutamate + NH4(+). It functions in the pathway purine metabolism; IMP biosynthesis via de novo pathway; 5-amino-1-(5-phospho-D-ribosyl)imidazole from N(2)-formyl-N(1)-(5-phospho-D-ribosyl)glycinamide: step 1/2. In terms of biological role, part of the phosphoribosylformylglycinamidine synthase complex involved in the purines biosynthetic pathway. Catalyzes the ATP-dependent conversion of formylglycinamide ribonucleotide (FGAR) and glutamine to yield formylglycinamidine ribonucleotide (FGAM) and glutamate. The FGAM synthase complex is composed of three subunits. PurQ produces an ammonia molecule by converting glutamine to glutamate. PurL transfers the ammonia molecule to FGAR to form FGAM in an ATP-dependent manner. PurS interacts with PurQ and PurL and is thought to assist in the transfer of the ammonia molecule from PurQ to PurL. The chain is Phosphoribosylformylglycinamidine synthase subunit PurQ from Lactobacillus delbrueckii subsp. bulgaricus (strain ATCC 11842 / DSM 20081 / BCRC 10696 / JCM 1002 / NBRC 13953 / NCIMB 11778 / NCTC 12712 / WDCM 00102 / Lb 14).